The following is a 459-amino-acid chain: Putrescine aminotransferase (459 aa).

Pyridoxal 5'-phosphate contacts are provided by residues 150-151 (GT) and Q274. K300 is modified (N6-(pyridoxal phosphate)lysine). T332 contacts pyridoxal 5'-phosphate.

Belongs to the class-III pyridoxal-phosphate-dependent aminotransferase family. Putrescine aminotransferase subfamily. Pyridoxal 5'-phosphate is required as a cofactor.

It carries out the reaction an alkane-alpha,omega-diamine + 2-oxoglutarate = an omega-aminoaldehyde + L-glutamate. The catalysed reaction is putrescine + 2-oxoglutarate = 1-pyrroline + L-glutamate + H2O. It catalyses the reaction cadaverine + 2-oxoglutarate = 5-aminopentanal + L-glutamate. Its pathway is amine and polyamine degradation; putrescine degradation; 4-aminobutanal from putrescine (transaminase route): step 1/1. Functionally, catalyzes the aminotransferase reaction from putrescine to 2-oxoglutarate, leading to glutamate and 4-aminobutanal, which spontaneously cyclizes to form 1-pyrroline. This is the first step in one of two pathways for putrescine degradation, where putrescine is converted into 4-aminobutanoate (gamma-aminobutyrate or GABA) via 4-aminobutanal. Also functions as a cadaverine transaminase in a a L-lysine degradation pathway to succinate that proceeds via cadaverine, glutarate and L-2-hydroxyglutarate. This Escherichia coli (strain K12 / MC4100 / BW2952) protein is Putrescine aminotransferase.